Reading from the N-terminus, the 358-residue chain is Mesaconyl-CoA hydratase (358 aa).

The protein belongs to the enoyl-CoA hydratase/isomerase family. In terms of assembly, homodimer.

It catalyses the reaction (2R,3S)-beta-methylmalyl-CoA = 2-methylfumaryl-CoA + H2O. With respect to regulation, shows highest activity at 0.5 M KCl. Does not require divalent ions for activity. In terms of biological role, involved in the methylaspartate cycle. Catalyzes the reversible hydration of mesaconyl-CoA (2-methylfumaryl-CoA) to yield beta-methylmalyl-CoA ((2R,3S)-beta-methylmalyl-CoA). Also shows activity with mesaconyl-C4-CoA (3-methylfumaryl-CoA), (S)-citramalyl-CoA and (S)-malyl-CoA. The sequence is that of Mesaconyl-CoA hydratase from Haloarcula hispanica (strain ATCC 33960 / DSM 4426 / JCM 8911 / NBRC 102182 / NCIMB 2187 / VKM B-1755).